Here is a 308-residue protein sequence, read N- to C-terminus: Putative ankyrin repeat protein R835 (308 aa).

6 ANK repeats span residues 100 to 129 (DINE…NIDL), 152 to 181 (PMNK…YVDF), 190 to 217 (SEYT…GANY), 218 to 247 (KSSY…DLEK), 249 to 277 (GLRS…EIDY), and 279 to 305 (YYIY…SKQI).

This is Putative ankyrin repeat protein R835 from Acanthamoeba polyphaga (Amoeba).